The primary structure comprises 258 residues: Tryptophan synthase alpha chain (258 aa).

Residues Glu52 and Asp63 each act as proton acceptor in the active site.

It belongs to the TrpA family. As to quaternary structure, tetramer of two alpha and two beta chains.

It carries out the reaction (1S,2R)-1-C-(indol-3-yl)glycerol 3-phosphate + L-serine = D-glyceraldehyde 3-phosphate + L-tryptophan + H2O. It participates in amino-acid biosynthesis; L-tryptophan biosynthesis; L-tryptophan from chorismate: step 5/5. Functionally, the alpha subunit is responsible for the aldol cleavage of indoleglycerol phosphate to indole and glyceraldehyde 3-phosphate. This chain is Tryptophan synthase alpha chain, found in Streptococcus pneumoniae serotype 2 (strain D39 / NCTC 7466).